The chain runs to 203 residues: ATP-dependent Clp protease proteolytic subunit (203 aa).

The active-site Nucleophile is Ser-107. The active site involves His-132.

This sequence belongs to the peptidase S14 family. As to quaternary structure, fourteen ClpP subunits assemble into 2 heptameric rings which stack back to back to give a disk-like structure with a central cavity, resembling the structure of eukaryotic proteasomes.

It is found in the cytoplasm. The enzyme catalyses Hydrolysis of proteins to small peptides in the presence of ATP and magnesium. alpha-casein is the usual test substrate. In the absence of ATP, only oligopeptides shorter than five residues are hydrolyzed (such as succinyl-Leu-Tyr-|-NHMec, and Leu-Tyr-Leu-|-Tyr-Trp, in which cleavage of the -Tyr-|-Leu- and -Tyr-|-Trp bonds also occurs).. Functionally, cleaves peptides in various proteins in a process that requires ATP hydrolysis. Has a chymotrypsin-like activity. Plays a major role in the degradation of misfolded proteins. The protein is ATP-dependent Clp protease proteolytic subunit of Shewanella woodyi (strain ATCC 51908 / MS32).